Consider the following 63-residue polypeptide: Cytochrome c oxidase subunit 7C, mitochondrial (63 aa).

The transit peptide at 1–16 (MLGHSIRRFTTSVVRR) directs the protein to the mitochondrion. Topologically, residues 17–33 (SHYEEGPGKNLPFSVKN) are mitochondrial matrix. Lys25 carries the post-translational modification N6-acetyllysine; alternate. N6-succinyllysine; alternate is present on Lys25. Residues 34-60 (KWALLVKMSLYFGSAFATPFLIVRHQL) traverse the membrane as a helical segment. Residues 61–63 (LKQ) are Mitochondrial intermembrane-facing.

It belongs to the cytochrome c oxidase VIIc family. As to quaternary structure, component of the cytochrome c oxidase (complex IV, CIV), a multisubunit enzyme composed of 14 subunits. The complex is composed of a catalytic core of 3 subunits MT-CO1, MT-CO2 and MT-CO3, encoded in the mitochondrial DNA, and 11 supernumerary subunits COX4I, COX5A, COX5B, COX6A, COX6B, COX6C, COX7A, COX7B, COX7C, COX8 and NDUFA4, which are encoded in the nuclear genome. The complex exists as a monomer or a dimer and forms supercomplexes (SCs) in the inner mitochondrial membrane with NADH-ubiquinone oxidoreductase (complex I, CI) and ubiquinol-cytochrome c oxidoreductase (cytochrome b-c1 complex, complex III, CIII), resulting in different assemblies (supercomplex SCI(1)III(2)IV(1) and megacomplex MCI(2)III(2)IV(2)). Interacts with RAB5IF.

It localises to the mitochondrion inner membrane. It participates in energy metabolism; oxidative phosphorylation. Functionally, component of the cytochrome c oxidase, the last enzyme in the mitochondrial electron transport chain which drives oxidative phosphorylation. The respiratory chain contains 3 multisubunit complexes succinate dehydrogenase (complex II, CII), ubiquinol-cytochrome c oxidoreductase (cytochrome b-c1 complex, complex III, CIII) and cytochrome c oxidase (complex IV, CIV), that cooperate to transfer electrons derived from NADH and succinate to molecular oxygen, creating an electrochemical gradient over the inner membrane that drives transmembrane transport and the ATP synthase. Cytochrome c oxidase is the component of the respiratory chain that catalyzes the reduction of oxygen to water. Electrons originating from reduced cytochrome c in the intermembrane space (IMS) are transferred via the dinuclear copper A center (CU(A)) of subunit 2 and heme A of subunit 1 to the active site in subunit 1, a binuclear center (BNC) formed by heme A3 and copper B (CU(B)). The BNC reduces molecular oxygen to 2 water molecules using 4 electrons from cytochrome c in the IMS and 4 protons from the mitochondrial matrix. This is Cytochrome c oxidase subunit 7C, mitochondrial (COX7C) from Papio hamadryas (Hamadryas baboon).